The following is a 378-amino-acid chain: TelA-like protein SAUSA300_1299 (378 aa).

It belongs to the TelA family.

This is TelA-like protein SAUSA300_1299 from Staphylococcus aureus (strain USA300).